The primary structure comprises 165 residues: UPF0303 protein Rleg2_2653 (165 aa).

Belongs to the UPF0303 family.

The chain is UPF0303 protein Rleg2_2653 from Rhizobium leguminosarum bv. trifolii (strain WSM2304).